We begin with the raw amino-acid sequence, 491 residues long: E3 ubiquitin-protein ligase Hakai (491 aa).

Disordered regions lie at residues 1–20 (MDHT…LGGL) and 33–61 (KQAS…GDEE). The RING-type zinc-finger motif lies at 109–149 (CDKCGLPIKVYGRMIPCKHVFCYDCAILHEKKGDKMCPGCS). Residues 148–206 (CSDPVQRIEQCTRGSLFMCSIVQGCKRTYLSQRDLQAHINHRHMRAGKPVTRASLENVH) are HYB domain. Residues 164–190 (FMCSIVQGCKRTYLSQRDLQAHINHRH) form a C2H2-type zinc finger. S201, S285, and S290 each carry phosphoserine. Residues 255–491 (QPHEDIRAPP…DQTRYRPYYQ (237 aa)) are disordered. Composition is skewed to pro residues over residues 342 to 359 (APPP…PHPP), 372 to 389 (APPP…PPPG), and 399 to 423 (MNHP…PPHH). The segment covering 427 to 442 (NSLPQFTEDQGTLSPP) has biased composition (polar residues). The span at 457 to 478 (PRGPPPPPRMQGPPSQTPLPGP) shows a compositional bias: pro residues.

This sequence belongs to the Hakai family. In terms of assembly, homodimer. Interacts with tyrosine-phosphorylated SRC substrates. Component of the WMM complex, a N6-methyltransferase complex composed of a catalytic subcomplex, named MAC, and of an associated subcomplex, named MACOM. The MAC subcomplex is composed of METTL3 and METTL14. The MACOM subcomplex is composed of WTAP, ZC3H13, CBLL1/HAKAI, VIRMA, and, in some cases of RBM15 (RBM15 or RBM15B). Also a component of a MACOM-like complex, named WTAP complex, composed of WTAP, ZC3H13, CBLL1, VIRMA, RBM15, BCLAF1 and THRAP3. In terms of processing, phosphorylated on tyrosine residues. In terms of tissue distribution, detected in heart, brain, spleen, lung, liver, skeletal muscle, kidney and testis.

Its subcellular location is the nucleus speckle. The protein localises to the nucleus. It is found in the nucleoplasm. The protein resides in the cytoplasm. The enzyme catalyses S-ubiquitinyl-[E2 ubiquitin-conjugating enzyme]-L-cysteine + [acceptor protein]-L-lysine = [E2 ubiquitin-conjugating enzyme]-L-cysteine + N(6)-ubiquitinyl-[acceptor protein]-L-lysine.. The protein operates within protein modification; protein ubiquitination. Functionally, E3 ubiquitin-protein ligase that mediates ubiquitination of several tyrosine-phosphorylated Src substrates, including CDH1, CTTN and DOK1. Targets CDH1 for endocytosis and degradation. Associated component of the WMM complex, a complex that mediates N6-methyladenosine (m6A) methylation of RNAs, a modification that plays a role in the efficiency of mRNA splicing and RNA processing. Its function in the WMM complex is unknown. This Mus musculus (Mouse) protein is E3 ubiquitin-protein ligase Hakai.